Reading from the N-terminus, the 427-residue chain is Glutamate-1-semialdehyde 2,1-aminomutase (427 aa).

Lys266 carries the N6-(pyridoxal phosphate)lysine modification.

The protein belongs to the class-III pyridoxal-phosphate-dependent aminotransferase family. HemL subfamily. As to quaternary structure, homodimer. Pyridoxal 5'-phosphate is required as a cofactor.

The protein resides in the cytoplasm. It catalyses the reaction (S)-4-amino-5-oxopentanoate = 5-aminolevulinate. Its pathway is porphyrin-containing compound metabolism; protoporphyrin-IX biosynthesis; 5-aminolevulinate from L-glutamyl-tRNA(Glu): step 2/2. This Dechloromonas aromatica (strain RCB) protein is Glutamate-1-semialdehyde 2,1-aminomutase.